Consider the following 92-residue polypeptide: Kinetoplastid membrane protein 11C (92 aa).

It belongs to the KMP-11 family. Monomer.

It is found in the cytoplasm. Its subcellular location is the cytoskeleton. The protein resides in the cell projection. The protein localises to the cilium. It localises to the flagellum. May be involved in the regulation of the cytoskeleton through interaction with the subpellicular microtubules. May be involved in parasite mobility and attachment to the surface of the host cell. Behaves as a strong immunogen during infection. The chain is Kinetoplastid membrane protein 11C (KMP-11C) from Leishmania infantum.